The sequence spans 565 residues: Ubiquitin carboxyl-terminal hydrolase 21 (565 aa).

The segment covering 1–14 (MPQASEHRLGRTRE) has biased composition (basic and acidic residues). The segment at 1–103 (MPQASEHRLG…PPPTVALPLP (103 aa)) is disordered. Pro residues predominate over residues 48-57 (MLRPLPPRPG). The span at 58 to 70 (LPDERLKKLELGR) shows a compositional bias: basic and acidic residues. A Nuclear export signal motif is present at residues 134 to 152 (ELGAALSRLALRPEPPTLR). In terms of domain architecture, USP spans 212–558 (VGLRNLGNTC…EGYVLFYQLM (347 aa)). Cys221 serves as the catalytic Nucleophile. Positions 384, 387, 437, and 440 each coordinate Zn(2+). The Proton acceptor role is filled by His518.

It belongs to the peptidase C19 family. USP21 subfamily. As to quaternary structure, interacts with BEND3. In terms of tissue distribution, highly expressed in heart, pancreas and skeletal muscle. Also expressed in brain, placenta, liver and kidney, and at very low level in lung.

Its subcellular location is the cytoplasm. The protein resides in the nucleus. The catalysed reaction is Thiol-dependent hydrolysis of ester, thioester, amide, peptide and isopeptide bonds formed by the C-terminal Gly of ubiquitin (a 76-residue protein attached to proteins as an intracellular targeting signal).. In terms of biological role, deubiquitinates histone H2A, a specific tag for epigenetic transcriptional repression, thereby acting as a coactivator. Deubiquitination of histone H2A releaves the repression of di- and trimethylation of histone H3 at 'Lys-4', resulting in regulation of transcriptional initiation. Regulates gene expression via histone H2A deubiquitination. Deubiquitinates BAZ2A/TIP5 leading to its stabilization. Also capable of removing NEDD8 from NEDD8 conjugates but has no effect on Sentrin-1 conjugates. Also acts as a negative regulator of the ribosome quality control (RQC) by mediating deubiquitination of 40S ribosomal proteins RPS10/eS10 and RPS20/uS10, thereby antagonizing ZNF598-mediated 40S ubiquitination. The polypeptide is Ubiquitin carboxyl-terminal hydrolase 21 (Homo sapiens (Human)).